A 333-amino-acid chain; its full sequence is Dehydrodolichyl diphosphate synthase complex subunit DHDDS (333 aa).

(2E,6E)-farnesyl diphosphate-binding residues include aspartate 34, glycine 35, arginine 37, arginine 38, and arginine 85. Isopentenyl diphosphate is bound by residues aspartate 34, glycine 35, arginine 37, arginine 38, arginine 85, arginine 205, arginine 211, and serine 213. Aspartate 34 contacts Mg(2+).

It belongs to the UPP synthase family. The active dehydrodolichyl diphosphate synthase complex is a heterotetramer composed of a dimer of heterodimer of DHDDS and NUS1. Interacts with NPC2. It depends on Mg(2+) as a cofactor. Ubiquitous. Expressed at high levels in testis and kidney. Expressed in epididymis (at protein level).

Its subcellular location is the endoplasmic reticulum membrane. The enzyme catalyses n isopentenyl diphosphate + (2E,6E)-farnesyl diphosphate = a di-trans,poly-cis-polyprenyl diphosphate + n diphosphate. It functions in the pathway protein modification; protein glycosylation. Its pathway is lipid metabolism. Activated by phospholipids including cardiolipin, phosphatidylcholine, phosphatidylethanolamine, phosphatidylinositol and phosphatidylserine. In terms of biological role, with NUS1, forms the dehydrodolichyl diphosphate synthase (DDS) complex, an essential component of the dolichol monophosphate (Dol-P) biosynthetic machinery. Both subunits contribute to enzymatic activity, i.e. condensation of multiple copies of isopentenyl pyrophosphate (IPP) to farnesyl pyrophosphate (FPP) to produce dehydrodolichyl diphosphate (Dedol-PP), a precursor of dolichol phosphate which is utilized as a sugar carrier in protein glycosylation in the endoplasmic reticulum (ER). Synthesizes long-chain polyprenols, mostly of C95 and C100 chain length. Regulates the glycosylation and stability of nascent NPC2, thereby promoting trafficking of LDL-derived cholesterol. In Homo sapiens (Human), this protein is Dehydrodolichyl diphosphate synthase complex subunit DHDDS.